A 305-amino-acid chain; its full sequence is tRNA dimethylallyltransferase (305 aa).

An ATP-binding site is contributed by 9–16 (GPTGAGKT). Residue 11-16 (TGAGKT) participates in substrate binding. 2 interaction with substrate tRNA regions span residues 34-37 (DSRQ) and 158-162 (QRIVR).

Belongs to the IPP transferase family. As to quaternary structure, monomer. It depends on Mg(2+) as a cofactor.

It carries out the reaction adenosine(37) in tRNA + dimethylallyl diphosphate = N(6)-dimethylallyladenosine(37) in tRNA + diphosphate. In terms of biological role, catalyzes the transfer of a dimethylallyl group onto the adenine at position 37 in tRNAs that read codons beginning with uridine, leading to the formation of N6-(dimethylallyl)adenosine (i(6)A). The polypeptide is tRNA dimethylallyltransferase (Oleidesulfovibrio alaskensis (strain ATCC BAA-1058 / DSM 17464 / G20) (Desulfovibrio alaskensis)).